Here is a 287-residue protein sequence, read N- to C-terminus: 4-diphosphocytidyl-2-C-methyl-D-erythritol kinase (287 aa).

The active site involves Lys-12. Residue 97-107 (PMGGGLGGGSS) coordinates ATP. Asp-139 is a catalytic residue.

Belongs to the GHMP kinase family. IspE subfamily.

It carries out the reaction 4-CDP-2-C-methyl-D-erythritol + ATP = 4-CDP-2-C-methyl-D-erythritol 2-phosphate + ADP + H(+). It functions in the pathway isoprenoid biosynthesis; isopentenyl diphosphate biosynthesis via DXP pathway; isopentenyl diphosphate from 1-deoxy-D-xylulose 5-phosphate: step 3/6. Functionally, catalyzes the phosphorylation of the position 2 hydroxy group of 4-diphosphocytidyl-2C-methyl-D-erythritol. This Marinobacter nauticus (strain ATCC 700491 / DSM 11845 / VT8) (Marinobacter aquaeolei) protein is 4-diphosphocytidyl-2-C-methyl-D-erythritol kinase.